Reading from the N-terminus, the 192-residue chain is Cytochrome c oxidase assembly protein CtaG (192 aa).

At 1–9 (MSLSPHQKT) the chain is on the cytoplasmic side. The helical; Signal-anchor for type II membrane protein transmembrane segment at 10 to 30 (AGWLVGVVVVMGAASFAAVPF) threads the bilayer. The Periplasmic portion of the chain corresponds to 31-192 (YDWFCRVTGF…AARPAGIDVN (162 aa)).

This sequence belongs to the COX11/CtaG family.

Its subcellular location is the cell inner membrane. Functionally, exerts its effect at some terminal stage of cytochrome c oxidase synthesis, probably by being involved in the insertion of the copper B into subunit I. In Cereibacter sphaeroides (strain ATCC 17025 / ATH 2.4.3) (Rhodobacter sphaeroides), this protein is Cytochrome c oxidase assembly protein CtaG.